The primary structure comprises 274 residues: Dermonecrotic toxin SdSicTox-betaIIB1biii (274 aa).

The active site involves His5. Positions 25 and 27 each coordinate Mg(2+). His41 (nucleophile) is an active-site residue. Intrachain disulfides connect Cys45-Cys51 and Cys47-Cys190. A Mg(2+)-binding site is contributed by Asp85.

This sequence belongs to the arthropod phospholipase D family. Class II subfamily. The cofactor is Mg(2+). As to expression, expressed by the venom gland.

The protein resides in the secreted. The catalysed reaction is an N-(acyl)-sphingosylphosphocholine = an N-(acyl)-sphingosyl-1,3-cyclic phosphate + choline. It catalyses the reaction an N-(acyl)-sphingosylphosphoethanolamine = an N-(acyl)-sphingosyl-1,3-cyclic phosphate + ethanolamine. It carries out the reaction a 1-acyl-sn-glycero-3-phosphocholine = a 1-acyl-sn-glycero-2,3-cyclic phosphate + choline. The enzyme catalyses a 1-acyl-sn-glycero-3-phosphoethanolamine = a 1-acyl-sn-glycero-2,3-cyclic phosphate + ethanolamine. Its function is as follows. Dermonecrotic toxins cleave the phosphodiester linkage between the phosphate and headgroup of certain phospholipids (sphingolipid and lysolipid substrates), forming an alcohol (often choline) and a cyclic phosphate. This toxin acts on sphingomyelin (SM). It may also act on ceramide phosphoethanolamine (CPE), lysophosphatidylcholine (LPC) and lysophosphatidylethanolamine (LPE), but not on lysophosphatidylserine (LPS), and lysophosphatidylglycerol (LPG). It acts by transphosphatidylation, releasing exclusively cyclic phosphate products as second products. Induces dermonecrosis, hemolysis, increased vascular permeability, edema, inflammatory response, and platelet aggregation. The sequence is that of Dermonecrotic toxin SdSicTox-betaIIB1biii from Sicarius cf. damarensis (strain GJB-2008) (Six-eyed sand spider).